Reading from the N-terminus, the 570-residue chain is Molecular chaperone MKKS (570 aa).

Position 192–199 (192–199 (GHIILGKS)) interacts with ATP. Positions 198–370 (KSLIVPLKGQ…FHLIPNEATI (173 aa)) are substrate-binding apical domain.

The protein belongs to the TCP-1 chaperonin family. Component of a complex composed at least of MKKS, BBS10, BBS12, TCP1, CCT2, CCT3, CCT4, CCT5 and CCT8. Interacts with STUB1. Interacts with BBS2 (via coiled coil domain). Interacts with CCDC28B. Interacts with BBS12. Interacts with SMARCC1, a component of the SWI/SNF complexes; the interaction takes place predominantly in the cytoplasm and may modulate SMARCC1 location. Interacts with DLEC1.

The protein localises to the cytoplasm. The protein resides in the cytoskeleton. It is found in the microtubule organizing center. It localises to the centrosome. Its subcellular location is the cytosol. The protein localises to the nucleus. In terms of biological role, probable molecular chaperone that assists the folding of proteins upon ATP hydrolysis. Plays a role in the assembly of BBSome, a complex involved in ciliogenesis regulating transports vesicles to the cilia. May play a role in protein processing in limb, cardiac and reproductive system development. May play a role in cytokinesis. The polypeptide is Molecular chaperone MKKS (MKKS) (Pongo abelii (Sumatran orangutan)).